The chain runs to 263 residues: Isoprenyl transferase (263 aa).

Asp-26 is an active-site residue. Asp-26 contacts Mg(2+). Substrate contacts are provided by residues 27–30, Trp-31, Arg-39, His-43, and 71–73; these read GNGR and SSE. The active-site Proton acceptor is the Asn-74. Substrate-binding positions include Trp-75, Arg-77, Arg-191, and 197–199; that span reads RIS. Residue Glu-210 participates in Mg(2+) binding. Residues 241 to 263 form a disordered region; the sequence is GRTSEQIAGQQENKNTVSNEDRV. Over residues 243–263 the composition is skewed to polar residues; sequence TSEQIAGQQENKNTVSNEDRV.

It belongs to the UPP synthase family. In terms of assembly, homodimer. Mg(2+) serves as cofactor.

Functionally, catalyzes the condensation of isopentenyl diphosphate (IPP) with allylic pyrophosphates generating different type of terpenoids. In Nitrosomonas europaea (strain ATCC 19718 / CIP 103999 / KCTC 2705 / NBRC 14298), this protein is Isoprenyl transferase.